The following is a 299-amino-acid chain: Ciliary microtubule inner protein 2B (299 aa).

The protein belongs to the CIMIP2 family. Expressed in airway epithelial cells.

Its subcellular location is the cytoplasm. It is found in the cytoskeleton. It localises to the cilium axoneme. Functionally, microtubule inner protein (MIP) part of the dynein-decorated doublet microtubules (DMTs) in cilia axoneme, which is required for motile cilia beating. In Danio rerio (Zebrafish), this protein is Ciliary microtubule inner protein 2B (cimip2b).